A 77-amino-acid polypeptide reads, in one-letter code: Large ribosomal subunit protein uL29 (77 aa).

This sequence belongs to the universal ribosomal protein uL29 family.

This is Large ribosomal subunit protein uL29 from Mycolicibacterium vanbaalenii (strain DSM 7251 / JCM 13017 / BCRC 16820 / KCTC 9966 / NRRL B-24157 / PYR-1) (Mycobacterium vanbaalenii).